The chain runs to 211 residues: ATP phosphoribosyltransferase (211 aa).

It belongs to the ATP phosphoribosyltransferase family. Short subfamily. In terms of assembly, heteromultimer composed of HisG and HisZ subunits.

The protein localises to the cytoplasm. The enzyme catalyses 1-(5-phospho-beta-D-ribosyl)-ATP + diphosphate = 5-phospho-alpha-D-ribose 1-diphosphate + ATP. It functions in the pathway amino-acid biosynthesis; L-histidine biosynthesis; L-histidine from 5-phospho-alpha-D-ribose 1-diphosphate: step 1/9. In terms of biological role, catalyzes the condensation of ATP and 5-phosphoribose 1-diphosphate to form N'-(5'-phosphoribosyl)-ATP (PR-ATP). Has a crucial role in the pathway because the rate of histidine biosynthesis seems to be controlled primarily by regulation of HisG enzymatic activity. This is ATP phosphoribosyltransferase from Bacillus thuringiensis subsp. konkukian (strain 97-27).